The sequence spans 1632 residues: uncharacterized protein (1632 aa).

Positions 1 to 15 are enriched in polar residues; it reads MSNNKQTAAPAATSN. The interval 1–23 is disordered; sequence MSNNKQTAAPAATSNEKAENGAE. The Cytoplasmic portion of the chain corresponds to 1–63; sequence MSNNKQTAAP…TKDAFKGKYR (63 aa). The helical transmembrane segment at 64–86 threads the bilayer; sequence VFYGNGLHTSIMFGAGTAALDLM. The Extracellular segment spans residues 87 to 1632; it reads TPGSFLPPFP…ESDGEEMSGE (1546 aa). Asparagine 149 and asparagine 274 each carry an N-linked (GlcNAc...) asparagine; by host glycan. Residues 516-538 are disordered; sequence ELSSQLGDTDTKKEQKEKRSKQG. 3 N-linked (GlcNAc...) asparagine; by host glycosylation sites follow: asparagine 654, asparagine 719, and asparagine 797. Positions 838 to 890 are disordered; that stretch reads IKGTKKSDDGDSKTDGSGDMEDDFTSLAKMTNRKRKAGGKDGPSKKKKKDGAD. Basic and acidic residues-rich tracts occupy residues 842 to 853 and 875 to 890; these read KKSDDGDSKTDG and GGKD…DGAD. Residues asparagine 1012, asparagine 1031, asparagine 1261, asparagine 1339, asparagine 1511, and asparagine 1546 are each glycosylated (N-linked (GlcNAc...) asparagine; by host). Residues 1603–1632 form a disordered region; sequence PSAMDVDEDEDEDMDDESDDESDGEEMSGE. A compositionally biased stretch (acidic residues) spans 1607 to 1632; sequence DVDEDEDEDMDDESDDESDGEEMSGE.

It localises to the host membrane. This is an uncharacterized protein from Ostreid herpesvirus 1 (isolate France) (OsHV-1).